The primary structure comprises 168 residues: MKPNDKVIIGRLARPYGLRGWIKVVSFTHPIDNLLNHPTWQIQHNNEWQPLKLQAGKLHEPFLVVKLENIDDPETAKHYTNDLIAIERRALGALKEGDYYWTDLIGLAVVNTHGIELGTVDSLIETGSNDVLVVRSKERERLIPYTSYTIQSIDLEKKIIVVEWDADF.

The 73-residue stretch at 96–168 (EGDYYWTDLI…IIVVEWDADF (73 aa)) folds into the PRC barrel domain.

It belongs to the RimM family. In terms of assembly, binds ribosomal protein uS19.

The protein resides in the cytoplasm. In terms of biological role, an accessory protein needed during the final step in the assembly of 30S ribosomal subunit, possibly for assembly of the head region. Essential for efficient processing of 16S rRNA. May be needed both before and after RbfA during the maturation of 16S rRNA. It has affinity for free ribosomal 30S subunits but not for 70S ribosomes. In Coxiella burnetii (strain RSA 331 / Henzerling II), this protein is Ribosome maturation factor RimM.